The chain runs to 204 residues: Cold and drought-regulated protein CORA (204 aa).

Repeat copies occupy residues 54–59 (YNHGGG), 65–70 (YNHGGG), 71–76 (YNHGGG), 78–83 (YHNGGG), 85–90 (YNHGGG), 98–100 (HGG), 101–103 (HGG), 112–114 (HGG), 115–117 (HGG), 126–128 (HGG), 129–131 (HGG), 164–169 (YNHGGG), 171–176 (YNHGGG), 178–180 (HGG), 181–183 (HGG), 184–186 (HGG), 187–189 (HGG), and 190–192 (HGG). Positions 54–176 (YNHGGGYNGG…GGGGYNHGGG (123 aa)) are 7 X 6 AA repeats of Y-N-H-G-G-G. The interval 98-192 (HGGHGGGGYN…GHGGHGGHGG (95 aa)) is 11 X 3 AA repeats of H-G-G. The span at 169-194 (GGYNHGGGGHGGHGGHGGHGGHGGHG) shows a compositional bias: gly residues. Positions 169–204 (GGYNHGGGGHGGHGGHGGHGGHGGHGAVQTEDNTQN) are disordered.

The protein belongs to the GRP family.

May be involved in resistance of the plant to environmental stress. This chain is Cold and drought-regulated protein CORA (CORA), found in Medicago sativa (Alfalfa).